A 161-amino-acid polypeptide reads, in one-letter code: Anthranilate 1,2-dioxygenase small subunit (161 aa).

Belongs to the bacterial ring-hydroxylating dioxygenase beta subunit family. As to quaternary structure, part of a multicomponent enzyme system composed of a reductase (AndAa), a ferredoxin (AndAb) and a two-subunit oxygenase component (AndAc and AndAd).

It catalyses the reaction anthranilate + NADH + O2 + 3 H(+) = catechol + NH4(+) + CO2 + NAD(+). It carries out the reaction anthranilate + NADPH + O2 + 3 H(+) = catechol + NH4(+) + CO2 + NADP(+). The protein operates within aromatic compound metabolism; anthranilate degradation via hydroxylation; catechol from anthranilate: step 1/1. Functionally, oxygenase component of anthranilate dioxygenase multicomponent enzyme system which catalyzes the incorporation of both atoms of molecular oxygen into anthranilate to form catechol. Can also act on benzoate and salicylate but not on 2-chlorobenzoate or o-toluate. The chain is Anthranilate 1,2-dioxygenase small subunit from Burkholderia cepacia (Pseudomonas cepacia).